Consider the following 131-residue polypeptide: Small ribosomal subunit protein uS8 (131 aa).

The protein belongs to the universal ribosomal protein uS8 family. In terms of assembly, part of the 30S ribosomal subunit. Contacts proteins S5 and S12.

In terms of biological role, one of the primary rRNA binding proteins, it binds directly to 16S rRNA central domain where it helps coordinate assembly of the platform of the 30S subunit. The chain is Small ribosomal subunit protein uS8 from Nitrosomonas europaea (strain ATCC 19718 / CIP 103999 / KCTC 2705 / NBRC 14298).